Reading from the N-terminus, the 84-residue chain is Small ribosomal subunit protein uS17 (84 aa).

The protein belongs to the universal ribosomal protein uS17 family. As to quaternary structure, part of the 30S ribosomal subunit.

Functionally, one of the primary rRNA binding proteins, it binds specifically to the 5'-end of 16S ribosomal RNA. The sequence is that of Small ribosomal subunit protein uS17 from Vibrio atlanticus (strain LGP32) (Vibrio splendidus (strain Mel32)).